Reading from the N-terminus, the 325-residue chain is Melanocortin receptor 5 (325 aa).

At 1-37 (MNSSFHLHFLDLNLNATEGNLSGPNVKNKSSPCEDMG) the chain is on the extracellular side. N-linked (GlcNAc...) asparagine glycosylation is found at Asn2, Asn15, Asn20, and Asn28. A helical membrane pass occupies residues 38–61 (IAVEVFLTLGVISLLENILVIGAI). Topologically, residues 62–73 (VKNKNLHSPMYF) are cytoplasmic. A helical membrane pass occupies residues 74–97 (FVCSLAVADMLVSMSSAWETITIY). Residues 98-114 (LLNNKHLVIADAFVRHI) are Extracellular-facing. Residues 115–138 (DNVFDSMICISVVASMCSLLAIAV) traverse the membrane as a helical segment. Residues 139–155 (DRYVTIFYALRYHHIMT) lie on the Cytoplasmic side of the membrane. Residues 156 to 179 (ARRSGAIIAGIWAFCTGCGIVFIL) traverse the membrane as a helical segment. The Extracellular portion of the chain corresponds to 180–186 (YSESTYV). The helical transmembrane segment at 187–211 (ILCLISMFFAMLFLLVSLYIHMFLL) threads the bilayer. Residues 212–239 (ARTHVKRIAALPGASSARQRTSMQGAVT) lie on the Cytoplasmic side of the membrane. The helical transmembrane segment at 240–265 (VTMLLGVFTVCWAPFFLHLTLMLSCP) threads the bilayer. Residues 266–273 (QNLYCSRF) lie on the Extracellular side of the membrane. The helical transmembrane segment at 274–297 (MSHFNMYLILIMCNSVMDPLIYAF) threads the bilayer. Topologically, residues 298–325 (RSQEMRKTFKEIICCRGFRIACSFPRRD) are cytoplasmic. Residues Cys311 and Cys312 are each lipidated (S-palmitoyl cysteine).

This sequence belongs to the G-protein coupled receptor 1 family. Expressed in the brain but not in the melanoma cells.

It localises to the cell membrane. Functionally, receptor for MSH (alpha, beta and gamma) and ACTH. The activity of this receptor is mediated by G proteins which activate adenylate cyclase. This receptor is a possible mediator of the immunomodulation properties of melanocortins. The sequence is that of Melanocortin receptor 5 (MC5R) from Homo sapiens (Human).